The primary structure comprises 460 residues: Jacalin-related lectin 36 (460 aa).

One can recognise a Jacalin-type lectin 1 domain in the interval 1-131 (MAAATMSWDD…LNSIDVHFAP (131 aa)). Alanine 2 carries the post-translational modification N-acetylalanine. Disordered regions lie at residues 34–57 (YDGD…VSLS), 133–162 (PSSS…WDDG), and 291–334 (SGRG…PHEG). Residues 133 to 143 (PSSSSSSSSLS) are compositionally biased toward low complexity. The Jacalin-type lectin 2 domain occupies 145-289 (ANKVDAQGGK…LNALGAYFAP (145 aa)). Polar residues predominate over residues 292–309 (GRGTPSATQPPGSAQPTG). The Jacalin-type lectin 3 domain occupies 313 to 457 (AKKLEAKGGN…IHQVGVHVKP (145 aa)).

Belongs to the jacalin lectin family.

The chain is Jacalin-related lectin 36 (JAL36) from Arabidopsis thaliana (Mouse-ear cress).